Here is a 114-residue protein sequence, read N- to C-terminus: Amphinase-1 (114 aa).

Histidine 15 serves as the catalytic Proton acceptor. Cystine bridges form between cysteine 26–cysteine 79, cysteine 41–cysteine 85, cysteine 59–cysteine 100, and cysteine 97–cysteine 114. Asparagine 27 is a glycosylation site (N-linked (GlcNAc...) asparagine). 42–46 provides a ligand contact to substrate; that stretch reads KPVNT. Residues asparagine 67 and asparagine 91 are each glycosylated (N-linked (GlcNAc...) asparagine). Catalysis depends on histidine 107, which acts as the Proton donor.

The protein belongs to the pancreatic ribonuclease family. Monomer. There are at least five different forms arising from glycan heterogeneity.

Its subcellular location is the secreted. In terms of biological role, endonuclease, hydrolyzes highly polymerized RNA, poly(U) and poly(C), and the dinucleotides CpA and UpA. More active towards rCA than rUA or rUG. Has cytotoxic activity against cultured human submaxillary gland carcinoma cells. In Lithobates pipiens (Northern leopard frog), this protein is Amphinase-1.